A 259-amino-acid chain; its full sequence is Imidazole glycerol phosphate synthase subunit HisF (259 aa).

Residues aspartate 11 and aspartate 130 contribute to the active site.

Belongs to the HisA/HisF family. Heterodimer of HisH and HisF.

It is found in the cytoplasm. The catalysed reaction is 5-[(5-phospho-1-deoxy-D-ribulos-1-ylimino)methylamino]-1-(5-phospho-beta-D-ribosyl)imidazole-4-carboxamide + L-glutamine = D-erythro-1-(imidazol-4-yl)glycerol 3-phosphate + 5-amino-1-(5-phospho-beta-D-ribosyl)imidazole-4-carboxamide + L-glutamate + H(+). Its pathway is amino-acid biosynthesis; L-histidine biosynthesis; L-histidine from 5-phospho-alpha-D-ribose 1-diphosphate: step 5/9. Functionally, IGPS catalyzes the conversion of PRFAR and glutamine to IGP, AICAR and glutamate. The HisF subunit catalyzes the cyclization activity that produces IGP and AICAR from PRFAR using the ammonia provided by the HisH subunit. The chain is Imidazole glycerol phosphate synthase subunit HisF from Nitratidesulfovibrio vulgaris (strain DP4) (Desulfovibrio vulgaris).